We begin with the raw amino-acid sequence, 231 residues long: MAKDTTGRMHVQVKTGGKRKLSSKLWLERQLNDPYVAQAKRDGYRSRATYKLIEIDDKYHMLKPGMTVVDLGAAPGGWSQIAARRVGAEAGKGKVVAIDLLEMGEIPGVTFAQLDFHAQDAPEKLRTMIGGRADVVMSDMAANTTGHRKTDQLRIVGLVELAAHFAGEVLKPGGSFLAKTFQSGADAELLAQLKRDYATVRHVKPAASRQDSSERYVLAMGFRGGEQADLL.

5 residues coordinate S-adenosyl-L-methionine: Gly76, Trp78, Asp99, Asp115, and Asp139. Catalysis depends on Lys179, which acts as the Proton acceptor.

Belongs to the class I-like SAM-binding methyltransferase superfamily. RNA methyltransferase RlmE family.

The protein resides in the cytoplasm. It carries out the reaction uridine(2552) in 23S rRNA + S-adenosyl-L-methionine = 2'-O-methyluridine(2552) in 23S rRNA + S-adenosyl-L-homocysteine + H(+). Specifically methylates the uridine in position 2552 of 23S rRNA at the 2'-O position of the ribose in the fully assembled 50S ribosomal subunit. This is Ribosomal RNA large subunit methyltransferase E from Bradyrhizobium sp. (strain ORS 278).